The following is a 298-amino-acid chain: GTPase Era (298 aa).

Residues 8–176 (HCGSVAVIGR…VRDVLALLPE (169 aa)) enclose the Era-type G domain. The segment at 16-23 (GRPNVGKS) is G1. A GTP-binding site is contributed by 16–23 (GRPNVGKS). The interval 42–46 (QTTRH) is G2. The G3 stretch occupies residues 63–66 (DTPG). GTP is bound by residues 63–67 (DTPGL) and 125–128 (NKID). The tract at residues 125–128 (NKID) is G4. Positions 155–157 (ISA) are G5. The KH type-2 domain occupies 199–283 (VREQLMRQLG…FLETWVRVRE (85 aa)).

It belongs to the TRAFAC class TrmE-Era-EngA-EngB-Septin-like GTPase superfamily. Era GTPase family. As to quaternary structure, monomer.

It is found in the cytoplasm. It localises to the cell inner membrane. In terms of biological role, an essential GTPase that binds both GDP and GTP, with rapid nucleotide exchange. Plays a role in 16S rRNA processing and 30S ribosomal subunit biogenesis and possibly also in cell cycle regulation and energy metabolism. The sequence is that of GTPase Era from Stenotrophomonas maltophilia (strain R551-3).